Consider the following 116-residue polypeptide: Protein Rev (116 aa).

Phosphoserine; by host CK2 is present on Ser5. Residues 18-26 (LIKILYQSN) form a homomultimerization region. Residues 23-49 (YQSNPPPSPEGTRQARRNRRRRWRARQ) are disordered. A Nuclear localization signal and RNA-binding (RRE) motif is present at residues 34 to 50 (TRQARRNRRRRWRARQR). Residues 36 to 49 (QARRNRRRRWRARQ) are compositionally biased toward basic residues. Positions 73-84 (LQLPPLERLNLN) match the Nuclear export signal and binding to XPO1 motif. The tract at residues 86–116 (SEDCGTSGTQGVGSPQISVESPTVLESGTEE) is disordered. A phosphoserine; by host mark is found at Ser92 and Ser99.

It belongs to the HIV-1 REV protein family. Homomultimer; when bound to the RRE. Multimeric assembly is essential for activity and may involve XPO1. Binds to human KPNB1, XPO1, TNPO1, RANBP5 and IPO7. Interacts with the viral Integrase. Interacts with human KHDRBS1. Interacts with human NAP1; this interaction decreases Rev multimerization and stimulates its activity. Interacts with human DEAD-box helicases DDX3 and DDX24; these interactions may serve for viral RNA export to the cytoplasm and packaging, respectively. Interacts with human PSIP1; this interaction may inhibit HIV-1 DNA integration by promoting dissociation of the Integrase-LEDGF/p75 complex. In terms of processing, asymmetrically arginine dimethylated at one site by host PRMT6. Methylation impairs the RNA-binding activity and export of viral RNA from the nucleus to the cytoplasm. Phosphorylated by protein kinase CK2. Presence of, and maybe binding to the N-terminus of the regulatory beta subunit of CK2 is necessary for CK2-mediated Rev's phosphorylation.

It localises to the host nucleus. It is found in the host nucleolus. Its subcellular location is the host cytoplasm. Its function is as follows. Escorts unspliced or incompletely spliced viral pre-mRNAs (late transcripts) out of the nucleus of infected cells. These pre-mRNAs carry a recognition sequence called Rev responsive element (RRE) located in the env gene, that is not present in fully spliced viral mRNAs (early transcripts). This function is essential since most viral proteins are translated from unspliced or partially spliced pre-mRNAs which cannot exit the nucleus by the pathway used by fully processed cellular mRNAs. Rev itself is translated from a fully spliced mRNA that readily exits the nucleus. Rev's nuclear localization signal (NLS) binds directly to KPNB1/Importin beta-1 without previous binding to KPNA1/Importin alpha-1. KPNB1 binds to the GDP bound form of RAN (Ran-GDP) and targets Rev to the nucleus. In the nucleus, the conversion from Ran-GDP to Ran-GTP dissociates Rev from KPNB1 and allows Rev's binding to the RRE in viral pre-mRNAs. Rev multimerization on the RRE via cooperative assembly exposes its nuclear export signal (NES) to the surface. Rev can then form a complex with XPO1/CRM1 and Ran-GTP, leading to nuclear export of the complex. Conversion from Ran-GTP to Ran-GDP mediates dissociation of the Rev/RRE/XPO1/RAN complex, so that Rev can return to the nucleus for a subsequent round of export. Beside KPNB1, also seems to interact with TNPO1/Transportin-1, RANBP5/IPO5 and IPO7/RANBP7 for nuclear import. The nucleoporin-like HRB/RIP is an essential cofactor that probably indirectly interacts with Rev to release HIV RNAs from the perinuclear region to the cytoplasm. The chain is Protein Rev from Homo sapiens (Human).